Consider the following 877-residue polypeptide: DNA repair protein rad16 (877 aa).

Residue S71 is modified to Phosphoserine; by CK2. The interval S440 to D490 is disordered. Over residues K444–A454 the composition is skewed to basic and acidic residues. Residues N475–D490 are compositionally biased toward polar residues. The ERCC4 domain occupies R652–Q732.

This sequence belongs to the XPF family. As to quaternary structure, heterodimer composed of rad16 and swi10.

The protein resides in the nucleus. The protein localises to the cytoplasm. It localises to the cytoskeleton. Its subcellular location is the microtubule organizing center. It is found in the spindle pole body. In terms of biological role, endonuclease that specifically degrades single-stranded DNA and which is involved in nucleotide excision repair of DNA damaged with UV light, bulky adducts, or cross-linking agents. Required for double strand break-induced interchromosomal gene conversion. The sequence is that of DNA repair protein rad16 (rad16) from Schizosaccharomyces pombe (strain 972 / ATCC 24843) (Fission yeast).